Reading from the N-terminus, the 459-residue chain is NADP-specific glutamate dehydrogenase (459 aa).

The active site involves K114.

Belongs to the Glu/Leu/Phe/Val dehydrogenases family. In terms of assembly, homohexamer.

The enzyme catalyses L-glutamate + NADP(+) + H2O = 2-oxoglutarate + NH4(+) + NADPH + H(+). This Emericella nidulans (strain FGSC A4 / ATCC 38163 / CBS 112.46 / NRRL 194 / M139) (Aspergillus nidulans) protein is NADP-specific glutamate dehydrogenase (gdhA).